The primary structure comprises 670 residues: Protein-glutamine gamma-glutamyltransferase 4 (670 aa).

N151 and N219 each carry an N-linked (GlcNAc...) asparagine glycan. C255 is an active-site residue. N288 carries N-linked (GlcNAc...) asparagine glycosylation. Active-site residues include H314 and D337. Ca(2+) is bound by residues N377, D379, E429, and E434. Residues N456 and N491 are each glycosylated (N-linked (GlcNAc...) asparagine).

This sequence belongs to the transglutaminase superfamily. Transglutaminase family. In terms of assembly, homodimer. It depends on Ca(2+) as a cofactor. As to expression, expressed in the coagulating gland and in the dorsal part of the prostate. Not expressed in the brain, heart, kidney, liver, lung, muscle, pancreas, spleen, stomach, testis and thymus.

The protein resides in the secreted. It carries out the reaction L-glutaminyl-[protein] + L-lysyl-[protein] = [protein]-L-lysyl-N(6)-5-L-glutamyl-[protein] + NH4(+). Associated with the mammalian reproductive process. Plays an important role in the formation of the seminal coagulum through the cross-linking of specific proteins present in the seminal plasma. Transglutaminase is also required to stabilize the copulatory plug. The polypeptide is Protein-glutamine gamma-glutamyltransferase 4 (Mus musculus (Mouse)).